Reading from the N-terminus, the 188-residue chain is uncharacterized protein (188 aa).

The chain crosses the membrane as a helical span at residues 121–139; the sequence is IWLYGGASLITTFINLGLV.

This sequence to B.subtilis YwjB.

The protein localises to the membrane. This is an uncharacterized protein from Bacillus subtilis (strain 168).